Reading from the N-terminus, the 428-residue chain is Serine--tRNA ligase (428 aa).

235 to 237 (TAE) is an L-serine binding site. 266–268 (RSE) lines the ATP pocket. Glutamate 289 is a binding site for L-serine. 353–356 (EISS) is an ATP binding site. Serine 389 contacts L-serine.

This sequence belongs to the class-II aminoacyl-tRNA synthetase family. Type-1 seryl-tRNA synthetase subfamily. In terms of assembly, homodimer. The tRNA molecule binds across the dimer.

The protein resides in the cytoplasm. It catalyses the reaction tRNA(Ser) + L-serine + ATP = L-seryl-tRNA(Ser) + AMP + diphosphate + H(+). It carries out the reaction tRNA(Sec) + L-serine + ATP = L-seryl-tRNA(Sec) + AMP + diphosphate + H(+). The protein operates within aminoacyl-tRNA biosynthesis; selenocysteinyl-tRNA(Sec) biosynthesis; L-seryl-tRNA(Sec) from L-serine and tRNA(Sec): step 1/1. Catalyzes the attachment of serine to tRNA(Ser). Is also able to aminoacylate tRNA(Sec) with serine, to form the misacylated tRNA L-seryl-tRNA(Sec), which will be further converted into selenocysteinyl-tRNA(Sec). The chain is Serine--tRNA ligase from Shewanella sediminis (strain HAW-EB3).